Reading from the N-terminus, the 728-residue chain is Phosphoribosylformylglycinamidine synthase subunit PurL (728 aa).

Residue H42 is part of the active site. ATP is bound by residues Y45 and K84. E86 is a binding site for Mg(2+). Residues 87–90 (SHNH) and R109 each bind substrate. Catalysis depends on H88, which acts as the Proton acceptor. D110 provides a ligand contact to Mg(2+). Residue Q237 coordinates substrate. A Mg(2+)-binding site is contributed by D265. Position 309 to 311 (309 to 311 (ESQ)) interacts with substrate. Residues D491 and G528 each contribute to the ATP site. N529 is a Mg(2+) binding site. S531 provides a ligand contact to substrate.

This sequence belongs to the FGAMS family. As to quaternary structure, monomer. Part of the FGAM synthase complex composed of 1 PurL, 1 PurQ and 2 PurS subunits.

The protein resides in the cytoplasm. The catalysed reaction is N(2)-formyl-N(1)-(5-phospho-beta-D-ribosyl)glycinamide + L-glutamine + ATP + H2O = 2-formamido-N(1)-(5-O-phospho-beta-D-ribosyl)acetamidine + L-glutamate + ADP + phosphate + H(+). It participates in purine metabolism; IMP biosynthesis via de novo pathway; 5-amino-1-(5-phospho-D-ribosyl)imidazole from N(2)-formyl-N(1)-(5-phospho-D-ribosyl)glycinamide: step 1/2. Functionally, part of the phosphoribosylformylglycinamidine synthase complex involved in the purines biosynthetic pathway. Catalyzes the ATP-dependent conversion of formylglycinamide ribonucleotide (FGAR) and glutamine to yield formylglycinamidine ribonucleotide (FGAM) and glutamate. The FGAM synthase complex is composed of three subunits. PurQ produces an ammonia molecule by converting glutamine to glutamate. PurL transfers the ammonia molecule to FGAR to form FGAM in an ATP-dependent manner. PurS interacts with PurQ and PurL and is thought to assist in the transfer of the ammonia molecule from PurQ to PurL. The chain is Phosphoribosylformylglycinamidine synthase subunit PurL from Campylobacter jejuni (strain RM1221).